Consider the following 404-residue polypeptide: Tryptophan synthase beta chain (404 aa).

Lysine 94 is modified (N6-(pyridoxal phosphate)lysine).

This sequence belongs to the TrpB family. In terms of assembly, tetramer of two alpha and two beta chains. Pyridoxal 5'-phosphate serves as cofactor.

The catalysed reaction is (1S,2R)-1-C-(indol-3-yl)glycerol 3-phosphate + L-serine = D-glyceraldehyde 3-phosphate + L-tryptophan + H2O. It functions in the pathway amino-acid biosynthesis; L-tryptophan biosynthesis; L-tryptophan from chorismate: step 5/5. The beta subunit is responsible for the synthesis of L-tryptophan from indole and L-serine. The sequence is that of Tryptophan synthase beta chain from Staphylococcus saprophyticus subsp. saprophyticus (strain ATCC 15305 / DSM 20229 / NCIMB 8711 / NCTC 7292 / S-41).